The following is a 292-amino-acid chain: Feruloyl esterase B (292 aa).

An N-terminal signal peptide occupies residues 1–18 (MLPRTLLGLALTAATGLC). Asn88, Asn117, Asn179, and Asn245 each carry an N-linked (GlcNAc...) asparagine glycan.

The protein belongs to the carbohydrate esterase 1 (CE1) family. Feruloyl esterase type B subfamily.

Its subcellular location is the secreted. It catalyses the reaction feruloyl-polysaccharide + H2O = ferulate + polysaccharide.. Functionally, involved in degradation of plant cell walls. Hydrolyzes of the feruloyl-arabinose ester bond in arabinoxylans as well as the feruloyl-galactose and feruloyl-arabinose ester bonds in pectin. The protein is Feruloyl esterase B (fae-1) of Neurospora crassa (strain ATCC 24698 / 74-OR23-1A / CBS 708.71 / DSM 1257 / FGSC 987).